The chain runs to 278 residues: tRNA (guanine-N(7)-)-methyltransferase (278 aa).

Residues 1 to 42 (MRHDGPMHVQPGVGLQSDTSSSTGTGSGPADEPEAEKSAWGY) form a disordered region. Glutamate 106, glutamate 131, asparagine 160, and aspartate 183 together coordinate S-adenosyl-L-methionine. Aspartate 183 is a catalytic residue. Residues lysine 187, aspartate 219, and 256-259 (TKYE) each bind substrate.

This sequence belongs to the class I-like SAM-binding methyltransferase superfamily. TrmB family.

It catalyses the reaction guanosine(46) in tRNA + S-adenosyl-L-methionine = N(7)-methylguanosine(46) in tRNA + S-adenosyl-L-homocysteine. Its pathway is tRNA modification; N(7)-methylguanine-tRNA biosynthesis. Catalyzes the formation of N(7)-methylguanine at position 46 (m7G46) in tRNA. This Mycobacterium ulcerans (strain Agy99) protein is tRNA (guanine-N(7)-)-methyltransferase.